Here is a 427-residue protein sequence, read N- to C-terminus: Tol-Pal system protein TolB (427 aa).

A signal peptide spans 1–27 (MPVSLLRALLVFSLLCLGLSATRAAHA).

The protein belongs to the TolB family. In terms of assembly, the Tol-Pal system is composed of five core proteins: the inner membrane proteins TolA, TolQ and TolR, the periplasmic protein TolB and the outer membrane protein Pal. They form a network linking the inner and outer membranes and the peptidoglycan layer.

It localises to the periplasm. Functionally, part of the Tol-Pal system, which plays a role in outer membrane invagination during cell division and is important for maintaining outer membrane integrity. The chain is Tol-Pal system protein TolB from Thiobacillus denitrificans (strain ATCC 25259 / T1).